Here is a 378-residue protein sequence, read N- to C-terminus: Forkhead box protein F1 (378 aa).

Residues 1-45 (MSAPDKQQPPHGGGTGGGGGAGGQAMDPAAAGPTKAKKTNAGVRR) are disordered. Gly residues predominate over residues 11–23 (HGGGTGGGGGAGG). The span at 24–42 (QAMDPAAAGPTKAKKTNAG) shows a compositional bias: low complexity. Positions 47–138 (EKPPYSYIAL…EFMFEEGSFR (92 aa)) form a DNA-binding region, fork-head.

As to expression, expressed primarily in lung in alveolar type II pneumocyte cells, and to a lesser extent in placenta, stomach, intestine and colon.

The protein resides in the nucleus. In terms of biological role, probable transcription activator for a number of lung-specific genes. The protein is Forkhead box protein F1 (Foxf1) of Mus musculus (Mouse).